Reading from the N-terminus, the 376-residue chain is 5-amino-6-(D-ribitylamino)uracil--L-tyrosine 4-hydroxyphenyl transferase 1 (376 aa).

One can recognise a Radical SAM core domain in the interval Val-50–Ala-275. Residues Cys-64, Cys-68, and Cys-71 each contribute to the [4Fe-4S] cluster site.

Belongs to the radical SAM superfamily. CofH family. Consists of two subunits, CofG and CofH. The cofactor is [4Fe-4S] cluster.

The enzyme catalyses 5-amino-6-(D-ribitylamino)uracil + L-tyrosine + S-adenosyl-L-methionine = 5-amino-5-(4-hydroxybenzyl)-6-(D-ribitylimino)-5,6-dihydrouracil + 2-iminoacetate + 5'-deoxyadenosine + L-methionine + H(+). The protein operates within cofactor biosynthesis; coenzyme F0 biosynthesis. Catalyzes the radical-mediated synthesis of 5-amino-5-(4-hydroxybenzyl)-6-(D-ribitylimino)-5,6-dihydrouracil from 5-amino-6-(D-ribitylamino)uracil and L-tyrosine. The chain is 5-amino-6-(D-ribitylamino)uracil--L-tyrosine 4-hydroxyphenyl transferase 1 from Methanosarcina mazei (strain ATCC BAA-159 / DSM 3647 / Goe1 / Go1 / JCM 11833 / OCM 88) (Methanosarcina frisia).